Consider the following 1104-residue polypeptide: Protein KIBRA (1104 aa).

2 WW domains span residues 6–39 (LPLPEGWEEARDFDGKVYYIDHRNRTTSWIDPRD) and 53–86 (DELPLGWEEAYDPQVGDYFIDHNTKTTQIEDPRV). Residues 107–193 (LSAQKEIYQV…ELQFKERGFQ (87 aa)) adopt a coiled-coil conformation. Ser-141 bears the Phosphoserine mark. Disordered stretches follow at residues 429-449 (SMQSLSSGSSPGSLTSSRGSL) and 509-547 (TQKAEGGSRLQALRSLSGTPRSMTSLSPRSSLSSPSPPC). Over residues 527–542 (TPRSMTSLSPRSSLSS) the composition is skewed to low complexity. Ser-535 bears the Phosphoserine mark. A Phosphoserine; by CDK1 modification is found at Ser-542. A C2 domain is found at 659–782 (GATRVQIALK…RSGERSTRWY (124 aa)). Positions 822 to 949 (LEKRQEGRSS…DSSTLSKKPP (128 aa)) are disordered. The interaction with histone H3 stretch occupies residues 836-1104 (EGSWTYEEEA…NIPALSADDV (269 aa)). Positions 841 to 862 (YEEEASENEAVAEEEEEGEEDV) are enriched in acidic residues. Phosphoserine is present on residues Ser-887, Ser-891, and Ser-919. A compositionally biased stretch (polar residues) spans 916 to 930 (IIRSKTFSPGPQSQY). Thr-921 carries the phosphothreonine modification. Ser-923 carries the phosphoserine; by CDK1 modification. The residue at position 939 (Ser-939) is a Phosphoserine. 2 interaction with PRKCZ regions span residues 945–988 (SKKP…LDLQ) and 948–967 (PPFVRNSLERRSVRMKRPSS). Phosphoserine; by PKC/PRKCZ is present on residues Ser-967 and Ser-970. Positions 994 to 1024 (HSQLTQEISVLKELKEHLEQAKNHGEKELPQ) form a coiled coil. Residues 1102-1104 (DDV) carry the ADDV motif motif.

It belongs to the WWC family. KIBRA subfamily. As to quaternary structure, homodimer. Forms heterodimers with WWC2 and WWC3. Interacts with DDN. Interacts with DYNLL1 and histone H3. The interaction with DYNLL1 is mandatory for the recruitment and transactivation functions of ESR1 or DYNLL1 to the target chromatin and the interaction with histone H3 ensures proper regulatory interaction of WWC1-DYNLL1-ESR1 complexes with target chromatin. Interacts (via WW domains) with DDR1 (via PPxY motif) in a collagen-regulated manner. Interacts with PRKCZ (via the protein kinase domain). Forms a tripartite complex with DDR1 and PRKCZ, but predominantly in the absence of collagen. Interacts (via the ADDV motif) with PATJ (via PDZ domain 8). Interacts (via WW domains) with SYNPO (via PPxY motifs). Interacts with NF2 and SNX4. Interacts with CCDC141; retains AMPAR in the cytosol after internalization. Interacts with DLC1 and PRKCZ. Interacts (via WW domains) with LATS1 and LATS2. Phosphorylation at Ser-542 and Ser-923 by CDK1 in response to spindle damage stress regulates mitotic exit, these two sites are dephosphorylated by CDC14B. Mammary epithelium.

Its subcellular location is the cytoplasm. It is found in the perinuclear region. The protein localises to the nucleus. The protein resides in the cell projection. It localises to the ruffle membrane. Its subcellular location is the cytosol. Functionally, regulator of the Hippo signaling pathway, also known as the Salvador-Warts-Hippo (SWH) pathway. Enhances phosphorylation of LATS1 and YAP1 and negatively regulates cell proliferation and organ growth due to a suppression of the transcriptional activity of YAP1, the major effector of the Hippo pathway. Along with NF2 can synergistically induce the phosphorylation of LATS1 and LATS2 and function in the regulation of Hippo signaling pathway. Acts as a transcriptional coactivator of ESR1 which plays an essential role in DYNLL1-mediated ESR1 transactivation. Modulates directional migration of podocytes. May be associated with memory performance. Regulates collagen-stimulated activation of the ERK/MAPK cascade. Plays an important role in regulating AMPA-selective glutamate receptors (AMPARs) trafficking. In Mus musculus (Mouse), this protein is Protein KIBRA (Wwc1).